The primary structure comprises 214 residues: Cell division protein DamX (214 aa).

Polar residues-rich tracts occupy residues 1 to 14 and 43 to 53; these read GSGT…QPQQ and QGMTGAASTLP. A disordered region spans residues 1–133; it reads GSGTPTEAQT…SVQSAPGSHY (133 aa). A helical transmembrane segment spans residues 44–65; the sequence is GMTGAASTLPTAPATVMSGAAA. 2 stretches are compositionally biased toward low complexity: residues 78–97 and 110–131; these read QQHK…TQHK and SSTA…APGS. Residues 127–204 enclose the SPOR domain; sequence SAPGSHYTLQ…VQAKKPWVRP (78 aa).

The protein belongs to the DamX family.

The protein localises to the cell inner membrane. Functionally, non-essential cell division protein. The polypeptide is Cell division protein DamX (Serratia marcescens).